Reading from the N-terminus, the 58-residue chain is Large ribosomal subunit protein uL30 (58 aa).

Belongs to the universal ribosomal protein uL30 family. As to quaternary structure, part of the 50S ribosomal subunit.

This chain is Large ribosomal subunit protein uL30, found in Bacteroides thetaiotaomicron (strain ATCC 29148 / DSM 2079 / JCM 5827 / CCUG 10774 / NCTC 10582 / VPI-5482 / E50).